The sequence spans 282 residues: Hydroxyethylthiazole kinase 2 (282 aa).

Met-44 serves as a coordination point for substrate. ATP contacts are provided by Arg-120 and Ser-179. Gly-206 lines the substrate pocket.

This sequence belongs to the Thz kinase family. Mg(2+) is required as a cofactor.

The enzyme catalyses 5-(2-hydroxyethyl)-4-methylthiazole + ATP = 4-methyl-5-(2-phosphooxyethyl)-thiazole + ADP + H(+). The protein operates within cofactor biosynthesis; thiamine diphosphate biosynthesis; 4-methyl-5-(2-phosphoethyl)-thiazole from 5-(2-hydroxyethyl)-4-methylthiazole: step 1/1. Catalyzes the phosphorylation of the hydroxyl group of 4-methyl-5-beta-hydroxyethylthiazole (THZ). This Methanosphaera stadtmanae (strain ATCC 43021 / DSM 3091 / JCM 11832 / MCB-3) protein is Hydroxyethylthiazole kinase 2.